The sequence spans 549 residues: O-fucosyltransferase 29 (549 aa).

Residues 43-63 (TVMWTWVCGFMLFSLGVISLF) form a helical; Signal-anchor for type II membrane protein membrane-spanning segment. N-linked (GlcNAc...) asparagine glycosylation is present at N152. 292-294 (HLR) contacts substrate. N-linked (GlcNAc...) asparagine glycosylation is found at N359 and N527. Positions 506–549 (PFSYDKTSTDDEEEDMSEENHNSTSPGHVHLSSADNERDEVFPD) are disordered. Basic and acidic residues predominate over residues 540 to 549 (DNERDEVFPD).

The protein belongs to the glycosyltransferase GT106 family.

The protein resides in the membrane. The protein operates within glycan metabolism. The polypeptide is O-fucosyltransferase 29 (Arabidopsis thaliana (Mouse-ear cress)).